Here is a 300-residue protein sequence, read N- to C-terminus: Transcriptional dual regulator GltC (300 aa).

Residues 1–58 (MELRQLRYFMEVAEREHVSEAADHLHVAQSAISRQIANLEEELNVTLFEREGRNIKLT) form the HTH lysR-type domain. The segment at residues 18–37 (VSEAADHLHVAQSAISRQIA) is a DNA-binding region (H-T-H motif).

The protein belongs to the LysR transcriptional regulatory family. In terms of assembly, interacts with gutamate dehydrogenase RocG.

With respect to regulation, activated by alpha-ketoglutarate and inhibited by glutamate and by RocG. In terms of biological role, positive regulator of glutamate biosynthesis (gltAB genes). Negatively regulates its own expression. This Bacillus subtilis (strain 168) protein is Transcriptional dual regulator GltC (gltC).